We begin with the raw amino-acid sequence, 219 residues long: Uridylate kinase (219 aa).

9 to 10 (GS) is a binding site for ATP. Glycine 41 serves as a coordination point for UMP. Residues glycine 42 and arginine 46 each coordinate ATP. UMP-binding positions include aspartate 63 and 110–116 (TFPGHTT). ATP is bound by residues threonine 136, asparagine 137, tyrosine 142, and aspartate 145.

This sequence belongs to the UMP kinase family. In terms of assembly, homohexamer.

It is found in the cytoplasm. The enzyme catalyses UMP + ATP = UDP + ADP. Its pathway is pyrimidine metabolism; CTP biosynthesis via de novo pathway; UDP from UMP (UMPK route): step 1/1. With respect to regulation, inhibited by UTP. Functionally, catalyzes the reversible phosphorylation of UMP to UDP. The sequence is that of Uridylate kinase from Archaeoglobus fulgidus (strain ATCC 49558 / DSM 4304 / JCM 9628 / NBRC 100126 / VC-16).